A 187-amino-acid chain; its full sequence is Transcription antitermination protein NusB (187 aa).

A disordered region spans residues 135 to 187 (APAPESVAEEADEESSDSDAAASDPTDEGDVSDSSGASDEPAAPSAEIQPTVD). A compositionally biased stretch (acidic residues) spans 141–151 (VAEEADEESSD).

The protein belongs to the NusB family.

Its function is as follows. Involved in transcription antitermination. Required for transcription of ribosomal RNA (rRNA) genes. Binds specifically to the boxA antiterminator sequence of the ribosomal RNA (rrn) operons. The protein is Transcription antitermination protein NusB of Bifidobacterium longum subsp. infantis (strain ATCC 15697 / DSM 20088 / JCM 1222 / NCTC 11817 / S12).